Here is a 246-residue protein sequence, read N- to C-terminus: Pyridoxine 5'-phosphate synthase (246 aa).

Residue asparagine 12 coordinates 3-amino-2-oxopropyl phosphate. 14–15 (DH) is a binding site for 1-deoxy-D-xylulose 5-phosphate. Residue arginine 23 coordinates 3-amino-2-oxopropyl phosphate. Histidine 48 functions as the Proton acceptor in the catalytic mechanism. 1-deoxy-D-xylulose 5-phosphate-binding residues include arginine 50 and histidine 55. The Proton acceptor role is filled by glutamate 75. Threonine 105 lines the 1-deoxy-D-xylulose 5-phosphate pocket. The active-site Proton donor is histidine 196. Residues glycine 197 and 218 to 219 (GH) contribute to the 3-amino-2-oxopropyl phosphate site.

This sequence belongs to the PNP synthase family. Homooctamer; tetramer of dimers.

It localises to the cytoplasm. The enzyme catalyses 3-amino-2-oxopropyl phosphate + 1-deoxy-D-xylulose 5-phosphate = pyridoxine 5'-phosphate + phosphate + 2 H2O + H(+). It participates in cofactor biosynthesis; pyridoxine 5'-phosphate biosynthesis; pyridoxine 5'-phosphate from D-erythrose 4-phosphate: step 5/5. In terms of biological role, catalyzes the complicated ring closure reaction between the two acyclic compounds 1-deoxy-D-xylulose-5-phosphate (DXP) and 3-amino-2-oxopropyl phosphate (1-amino-acetone-3-phosphate or AAP) to form pyridoxine 5'-phosphate (PNP) and inorganic phosphate. The protein is Pyridoxine 5'-phosphate synthase of Pseudomonas syringae pv. tomato (strain ATCC BAA-871 / DC3000).